Here is a 690-residue protein sequence, read N- to C-terminus: Eukaryotic translation initiation factor 3 subunit B (690 aa).

Basic and acidic residues predominate over residues methionine 1 to glycine 11. Residues methionine 1 to aspartate 33 form a disordered region. Residues asparagine 15–phenylalanine 25 are compositionally biased toward acidic residues. The RRM domain occupies serine 57–aspartate 141. WD repeat units lie at residues threonine 207–lysine 246, glycine 292–leucine 331, isoleucine 334–glutamate 369, glutamate 442–leucine 484, and proline 530–threonine 575. Residues glutamate 613–isoleucine 646 are a coiled coil.

This sequence belongs to the eIF-3 subunit B family. Component of the eukaryotic translation initiation factor 3 (eIF-3) complex. The eIF-3 complex interacts with pix. Interacts with mxt.

It is found in the cytoplasm. In terms of biological role, RNA-binding component of the eukaryotic translation initiation factor 3 (eIF-3) complex, which is involved in protein synthesis of a specialized repertoire of mRNAs and, together with other initiation factors, stimulates binding of mRNA and methionyl-tRNAi to the 40S ribosome. The eIF-3 complex specifically targets and initiates translation of a subset of mRNAs involved in cell proliferation. This chain is Eukaryotic translation initiation factor 3 subunit B, found in Drosophila mojavensis (Fruit fly).